A 602-amino-acid polypeptide reads, in one-letter code: Alpha-glucosides permease MPH3 (602 aa).

At 1 to 106 the chain is on the cytoplasmic side; the sequence is MKNLSFLINR…AAAWSLLVST (106 aa). Residues 107–127 traverse the membrane as a helical segment; sequence TLIMEGYDTAILGAFYALPIF. Residues 128–142 lie on the Extracellular side of the membrane; sequence QRKFGSQNDKTGEWE. The helical transmembrane segment at 143-163 threads the bilayer; the sequence is ISASWQIGLTLCYMAGEIVGL. Residues 164–178 lie on the Cytoplasmic side of the membrane; sequence QLTGPSVDLVGNRYT. Residues 179–199 traverse the membrane as a helical segment; sequence LIIALFFLAAFTFILYFCNSL. Gly-200 is a topological domain (extracellular). Residues 201-221 form a helical membrane-spanning segment; that stretch reads MIAVGQALCGMPWGCFQCLTV. At 222-234 the chain is on the cytoplasmic side; it reads SYASEICPLALRY. A helical membrane pass occupies residues 235–255; sequence YLTTYSNLCWLFGQLFAAGIM. The Extracellular portion of the chain corresponds to 256 to 270; sequence KNSQKKYADSELGYK. Residues 271–291 form a helical membrane-spanning segment; that stretch reads LPFALQWILPVPLALGIFFAP. Residues 292–363 are Cytoplasmic-facing; the sequence is ESPWWLVKKG…EDKINRRRTR (72 aa). A helical transmembrane segment spans residues 364–384; that stretch reads ITCLCWAGQATCGSILIGYST. At 385–397 the chain is on the extracellular side; the sequence is YFYEKAGVSTEMS. The chain crosses the membrane as a helical span at residues 398-418; sequence FTFSIIQYCLGICATFLSWWA. Residues 419 to 426 lie on the Cytoplasmic side of the membrane; sequence SKYFGRYD. The chain crosses the membrane as a helical span at residues 427–447; it reads LYAFGLAFQTIVFFIIGGLGC. Topologically, residues 448 to 459 are extracellular; that stretch reads SSTHGSKMGSGS. Residues 460–480 traverse the membrane as a helical segment; the sequence is LLMAVAFFYNLGIAPVVFCLV. Residues 481–492 are Cytoplasmic-facing; that stretch reads SEMPSSRLRTKT. Residues 493–513 form a helical membrane-spanning segment; the sequence is IILARNTYNVVSIICSVLILY. Residues 514 to 525 lie on the Extracellular side of the membrane; the sequence is QLNSKKWNWGAK. Residues 526–546 form a helical membrane-spanning segment; sequence SGFFWGVLCFCTLIWAVVDLP. At 547-602 the chain is on the cytoplasmic side; sequence ETAGKTFVEINELFKLGVSARKFKSTKVDPFVVKNTPKYVSHNDPKGDIEASIAEE.

Belongs to the major facilitator superfamily. Sugar transporter (TC 2.A.1.1) family.

The protein localises to the cell membrane. Its function is as follows. High-affinity uptake of maltose and maltotriose. Also transports alpha-methylglucoside, glucose and turanose but not melezitose or trehalose. The polypeptide is Alpha-glucosides permease MPH3 (MPH3) (Saccharomyces cerevisiae (strain YJM789) (Baker's yeast)).